The sequence spans 300 residues: Protoheme IX farnesyltransferase (300 aa).

9 helical membrane-spanning segments follow: residues isoleucine 20–glycine 40, threonine 43–serine 63, proline 94–isoleucine 114, proline 116–leucine 136, leucine 142–alanine 162, leucine 173–phenylalanine 193, isoleucine 215–valine 235, leucine 241–isoleucine 261, and methionine 276–isoleucine 296.

Belongs to the UbiA prenyltransferase family. Protoheme IX farnesyltransferase subfamily.

The protein localises to the cell membrane. The catalysed reaction is heme b + (2E,6E)-farnesyl diphosphate + H2O = Fe(II)-heme o + diphosphate. It functions in the pathway porphyrin-containing compound metabolism; heme O biosynthesis; heme O from protoheme: step 1/1. Its function is as follows. Converts heme B (protoheme IX) to heme O by substitution of the vinyl group on carbon 2 of heme B porphyrin ring with a hydroxyethyl farnesyl side group. The sequence is that of Protoheme IX farnesyltransferase from Christiangramia forsetii (strain DSM 17595 / CGMCC 1.15422 / KT0803) (Gramella forsetii).